The primary structure comprises 546 residues: Probable protein kinase UbiB (546 aa).

In terms of domain architecture, Protein kinase spans 123–501; sequence DFDETPLASA…SRRQGQARYL (379 aa). Residues 129-137 and Lys-152 contribute to the ATP site; that span reads LASASIAQV. Asp-287 acts as the Proton acceptor in catalysis. Transmembrane regions (helical) follow at residues 496–516 and 521–541; these read GQAR…VFLL and HIEW…LGWF.

This sequence belongs to the ABC1 family. UbiB subfamily.

The protein localises to the cell inner membrane. It participates in cofactor biosynthesis; ubiquinone biosynthesis [regulation]. Its function is as follows. Is probably a protein kinase regulator of UbiI activity which is involved in aerobic coenzyme Q (ubiquinone) biosynthesis. The polypeptide is Probable protein kinase UbiB (Aeromonas salmonicida (strain A449)).